Reading from the N-terminus, the 534-residue chain is Bifunctional purine biosynthesis protein PurH (534 aa).

The MGS-like domain occupies 1–148 (MNTVRPIRRA…KNHQDVTIVV (148 aa)).

The protein belongs to the PurH family.

The catalysed reaction is (6R)-10-formyltetrahydrofolate + 5-amino-1-(5-phospho-beta-D-ribosyl)imidazole-4-carboxamide = 5-formamido-1-(5-phospho-D-ribosyl)imidazole-4-carboxamide + (6S)-5,6,7,8-tetrahydrofolate. The enzyme catalyses IMP + H2O = 5-formamido-1-(5-phospho-D-ribosyl)imidazole-4-carboxamide. The protein operates within purine metabolism; IMP biosynthesis via de novo pathway; 5-formamido-1-(5-phospho-D-ribosyl)imidazole-4-carboxamide from 5-amino-1-(5-phospho-D-ribosyl)imidazole-4-carboxamide (10-formyl THF route): step 1/1. Its pathway is purine metabolism; IMP biosynthesis via de novo pathway; IMP from 5-formamido-1-(5-phospho-D-ribosyl)imidazole-4-carboxamide: step 1/1. The sequence is that of Bifunctional purine biosynthesis protein PurH from Shewanella denitrificans (strain OS217 / ATCC BAA-1090 / DSM 15013).